Consider the following 203-residue polypeptide: Thymidylate kinase (203 aa).

Position 10–17 (10–17) interacts with ATP; sequence GIDGSGKS.

The protein belongs to the thymidylate kinase family.

The catalysed reaction is dTMP + ATP = dTDP + ADP. Phosphorylation of dTMP to form dTDP in both de novo and salvage pathways of dTTP synthesis. The protein is Thymidylate kinase of Brachyspira hyodysenteriae (strain ATCC 49526 / WA1).